The chain runs to 114 residues: MVDQNPKRSGEPPVWLMFGAGGTVSAIFLPVVILIIGLLLPFGLVNVHNLITFAYSWIGKLVILVLTIFPMWCGLHRIHHGMHDLKVHVPAGGFIFYGLATIYTVWVLFAVINL.

Helical transmembrane passes span 24 to 44 (VSAIFLPVVILIIGLLLPFGL), 50 to 70 (LITFAYSWIGKLVILVLTIFP), and 92 to 112 (GGFIFYGLATIYTVWVLFAVI).

The protein belongs to the FrdD family. Part of an enzyme complex containing four subunits: a flavoprotein (FrdA), an iron-sulfur protein (FrdB), and two hydrophobic anchor proteins (FrdC and FrdD).

The protein localises to the cell inner membrane. In terms of biological role, anchors the catalytic components of the fumarate reductase complex to the cell membrane, binds quinones. This is Fumarate reductase subunit D from Haemophilus influenzae (strain PittGG).